The primary structure comprises 107 residues: C-X-C motif chemokine 2 (107 aa).

An N-terminal signal peptide occupies residues Met1 to Gly34. Disulfide bonds link Cys43-Cys69 and Cys45-Cys85.

Belongs to the intercrine alpha (chemokine CxC) family. In terms of processing, the N-terminal processed form GRO-beta(5-73) is produced by proteolytic cleavage after secretion from bone marrow stromal cells.

Its subcellular location is the secreted. Functionally, produced by activated monocytes and neutrophils and expressed at sites of inflammation. Hematoregulatory chemokine, which, in vitro, suppresses hematopoietic progenitor cell proliferation. GRO-beta(5-73) shows a highly enhanced hematopoietic activity. This chain is C-X-C motif chemokine 2 (CXCL2), found in Homo sapiens (Human).